We begin with the raw amino-acid sequence, 1765 residues long: RANBP2-like and GRIP domain-containing protein 5/6 (1765 aa).

T19 bears the Phosphothreonine mark. S21 is modified (phosphoserine). 3 TPR repeats span residues 26-59, 60-93, and 648-681; these read SMKG…QERD, PKAH…NPTQ, and EDAH…VSYW. Disordered stretches follow at residues 760-804 and 924-945; these read GPLY…PRWT and FGIS…NDTG. Residues 778 to 797 are compositionally biased toward low complexity; sequence STPSPTKYSLSPSKSYKYSP. Positions 931–941 are enriched in basic and acidic residues; sequence NQEKKREKPLE. The RanBD1 1 domain occupies 1036 to 1172; the sequence is HFEPVVQMPE…FEECQRLLLD (137 aa). Disordered regions lie at residues 1214-1247 and 1306-1330; these read KVTE…PTLE and AKLN…EERD. Residues 1235 to 1244 show a composition bias toward polar residues; that stretch reads IKPNAENTGP. Acidic residues predominate over residues 1317 to 1329; that stretch reads TDEESVVTQEEER. The RanBD1 2 domain maps to 1333-1469; it reads YFEPVVPLPD…FDEAKTAQEK (137 aa). The segment covering 1580-1593 has biased composition (polar residues); it reads NNSETSSVAQSGSE. The segment at 1580 to 1621 is disordered; the sequence is NNSETSSVAQSGSESKVEPKKCELSKNSDIEQSSDSKVKNLS. Residues 1594–1617 are compositionally biased toward basic and acidic residues; it reads SKVEPKKCELSKNSDIEQSSDSKV. The region spanning 1702–1752 is the GRIP domain; that stretch reads REKSAANLEYLKNVLLQFIFLKPGSERERLLPVINTMLQLSPEEKGKLAAV.

In terms of tissue distribution, expressed in testis.

The protein resides in the cytoplasm. The sequence is that of RANBP2-like and GRIP domain-containing protein 5/6 (RGPD5) from Homo sapiens (Human).